The primary structure comprises 142 residues: Lysosomal enzyme trafficking factor (142 aa).

2 helical membrane passes run 8–28 (MGWI…YYIF) and 76–96 (LLPF…VFLF).

The protein belongs to the LYSET family.

The protein localises to the golgi apparatus membrane. Its function is as follows. Required for mannose-6-phosphate-dependent trafficking of lysosomal enzymes. LYSET bridges GlcNAc-1-phosphate transferase (GNPTAB), to the membrane-bound transcription factor site-1 protease (MBTPS1), thus allowing proteolytic activation of the GNPTAB. GNPTAB is involved in the regulation of M6P-dependent Golgi-to-lysosome trafficking of lysosomal enzymes. LYSET is thus an essential factor for maturation and delivery of lysosomal hydrolases. This chain is Lysosomal enzyme trafficking factor (tmem251), found in Danio rerio (Zebrafish).